The following is a 335-amino-acid chain: GTPase Obg (335 aa).

The Obg domain occupies methionine 1 to isoleucine 158. The 176-residue stretch at alanine 159 to serine 334 folds into the OBG-type G domain. GTP-binding positions include glycine 165–serine 172, phenylalanine 190–histidine 194, aspartate 215–glycine 218, asparagine 285–aspartate 288, and serine 315–leucine 317. 2 residues coordinate Mg(2+): serine 172 and threonine 192.

Belongs to the TRAFAC class OBG-HflX-like GTPase superfamily. OBG GTPase family. Monomer. Requires Mg(2+) as cofactor.

The protein localises to the cytoplasm. Functionally, an essential GTPase which binds GTP, GDP and possibly (p)ppGpp with moderate affinity, with high nucleotide exchange rates and a fairly low GTP hydrolysis rate. Plays a role in control of the cell cycle, stress response, ribosome biogenesis and in those bacteria that undergo differentiation, in morphogenesis control. This is GTPase Obg from Chlamydia trachomatis serovar A (strain ATCC VR-571B / DSM 19440 / HAR-13).